We begin with the raw amino-acid sequence, 345 residues long: Dihydroorotase (345 aa).

Zn(2+) is bound by residues His13 and His15. Residues 15–17 and Asn41 contribute to the substrate site; that span reads HFR. 3 residues coordinate Zn(2+): Lys98, His135, and His173. An N6-carboxylysine modification is found at Lys98. Position 135 (His135) interacts with substrate. Residue Leu218 coordinates substrate. Asp246 serves as a coordination point for Zn(2+). Asp246 is an active-site residue. Substrate-binding residues include His250 and Ala262.

It belongs to the metallo-dependent hydrolases superfamily. DHOase family. Class II DHOase subfamily. In terms of assembly, homodimer. The cofactor is Zn(2+).

The catalysed reaction is (S)-dihydroorotate + H2O = N-carbamoyl-L-aspartate + H(+). It functions in the pathway pyrimidine metabolism; UMP biosynthesis via de novo pathway; (S)-dihydroorotate from bicarbonate: step 3/3. Functionally, catalyzes the reversible cyclization of carbamoyl aspartate to dihydroorotate. This chain is Dihydroorotase, found in Shewanella frigidimarina (strain NCIMB 400).